The chain runs to 85 residues: Large ribosomal subunit protein bL27 (85 aa).

The segment at 1 to 20 (MAHKKAGGSTRNGRDSEAKR) is disordered.

Belongs to the bacterial ribosomal protein bL27 family.

This is Large ribosomal subunit protein bL27 from Citrobacter koseri (strain ATCC BAA-895 / CDC 4225-83 / SGSC4696).